The sequence spans 412 residues: MAKRPLGLGKQSREKKRKVESVEKKSDEPSRESTPVRSQMSVELDDDADLDDELAQLKGLWSKYFHSDRDDEYVLNGIVHECDRLLRLSEEDKEIKKTLNDIFHGIYALALSELTIFKAGDEEATEEKRKKDVSSFFESAIERVELGLSHFPESQFLKLVLAKIIFQRIPLEYISNLHLKSKDKKLDLVGQLEHGKKHFSIYENDTEFTFEILQMVNDLLDIVENFGREQSIQEGIDSDNEEEEELIDIELEPEHPVYPLQQSLEANYEWLRNHFDKLLDNTNTDVKIYASIANTLGELYLKKAEEPSKVFLSLQYDDGGSEKVSDKEAKNAQETALKHTKKALEYLEKAKLEDDPDTWVQVAEAYIDLGNLLDNESAEQEEAYKTAEEILGKANKASHGKFQDVLDNFLQG.

The disordered stretch occupies residues methionine 1 to aspartate 45. The segment covering arginine 17–arginine 31 has biased composition (basic and acidic residues). The residue at position 30 (serine 30) is a Phosphoserine. The segment covering glutamate 32–serine 41 has biased composition (polar residues).

This sequence belongs to the ETT1 family. In terms of assembly, interacts with STM1.

The protein resides in the nucleus. Its function is as follows. Required for correct translation termination and probably involved in regulation of hypoxic gene expression in association TPA1. Inhibits replication of Brome mosaic virus. This chain is Enhancer of translation termination 1 (ETT1), found in Saccharomyces cerevisiae (strain JAY291) (Baker's yeast).